Consider the following 71-residue polypeptide: NAD(P)H-quinone oxidoreductase subunit O (71 aa).

It belongs to the complex I NdhO subunit family. In terms of assembly, NDH-1 can be composed of about 15 different subunits; different subcomplexes with different compositions have been identified which probably have different functions.

The protein localises to the cellular thylakoid membrane. The catalysed reaction is a plastoquinone + NADH + (n+1) H(+)(in) = a plastoquinol + NAD(+) + n H(+)(out). It carries out the reaction a plastoquinone + NADPH + (n+1) H(+)(in) = a plastoquinol + NADP(+) + n H(+)(out). Its function is as follows. NDH-1 shuttles electrons from an unknown electron donor, via FMN and iron-sulfur (Fe-S) centers, to quinones in the respiratory and/or the photosynthetic chain. The immediate electron acceptor for the enzyme in this species is believed to be plastoquinone. Couples the redox reaction to proton translocation, and thus conserves the redox energy in a proton gradient. Cyanobacterial NDH-1 also plays a role in inorganic carbon-concentration. This Picosynechococcus sp. (strain ATCC 27264 / PCC 7002 / PR-6) (Agmenellum quadruplicatum) protein is NAD(P)H-quinone oxidoreductase subunit O.